The chain runs to 224 residues: Putative O-methyltransferase MLBr01075 (224 aa).

S-adenosyl-L-methionine-binding positions include Val51, Glu73, 75 to 76 (GT), Ser81, Asp99, and Ile100. Position 147 (Asp147) interacts with substrate. Position 149 (Asp149) interacts with S-adenosyl-L-methionine.

Belongs to the class I-like SAM-binding methyltransferase superfamily. Cation-dependent O-methyltransferase family.

The chain is Putative O-methyltransferase MLBr01075 from Mycobacterium leprae (strain Br4923).